Here is a 136-residue protein sequence, read N- to C-terminus: Autophagy-related protein 41 (136 aa).

Residues 127–136 (QNYRLWLSSV) are ATG9-binding.

Interacts with ATG9.

Its subcellular location is the preautophagosomal structure membrane. In terms of biological role, involved in both selective and non-selective autophagy. Does not appear to play a role in determining the size of autophagosomes, but rather influences their formation rate. With ATG9, plays a role in the delivery of donor membrane to expanding phagophore. This is Autophagy-related protein 41 from Saccharomyces cerevisiae (strain ATCC 204508 / S288c) (Baker's yeast).